The following is a 553-amino-acid chain: Interleukin-20 receptor subunit alpha (553 aa).

Residues 1 to 29 (MRAPGRPALRPLPLPPLLLLLLAAPWGRA) form the signal peptide. The Extracellular segment spans residues 30 to 250 (VPCVSGGLPK…KDQSSEFKAK (221 aa)). 2 Fibronectin type-III domains span residues 37–135 (LPKP…FLET) and 136–242 (QIGP…TLKD). N-linked (GlcNAc...) asparagine glycosylation is found at Asn42, Asn83, Asn91, Asn182, Asn191, and Asn200. The cysteines at positions 87 and 95 are disulfide-linked. A disulfide bond links Cys215 and Cys236. The chain crosses the membrane as a helical span at residues 251–271 (IIFWYVLPVSITVFLFSVMGY). Over 272-553 (SIYRYIHVGK…EWGLYVQMEN (282 aa)) the chain is Cytoplasmic. Disordered stretches follow at residues 333–353 (SSDVSSLNDPQPSGNLRPPQE) and 462–515 (QEHT…LGEE). Polar residues predominate over residues 334 to 346 (SDVSSLNDPQPSG). The span at 499-513 (QDSEGCEPSEGDGLG) shows a compositional bias: acidic residues.

It belongs to the type II cytokine receptor family. As to quaternary structure, heterodimer with IL20RB and heterodimer with IL10RB. In terms of tissue distribution, widely expressed with highest levels in skin and testis and high levels in brain. Highly expressed in psoriatic skin.

Its subcellular location is the membrane. In terms of biological role, the IL20RA/IL20RB dimer is a receptor for IL19, IL20 and IL24. The IL20RA/IL10RB dimer is a receptor for IL26. The protein is Interleukin-20 receptor subunit alpha (IL20RA) of Homo sapiens (Human).